The chain runs to 91 residues: uncharacterized protein (91 aa).

A signal peptide spans 1–21; sequence MKIISKMLVGALALAVTNVYA.

This sequence belongs to the BhsA/McbA family.

It localises to the periplasm. This is an uncharacterized protein from Escherichia coli (strain K12).